The sequence spans 434 residues: MPNRKASRNAYYFFVQEKIPELRRRGLPVARVADAIPYCSADWALLREEEKEKYAEMAREWRAAQGKDSGPSEKQKPVFTPLRKPGMLVPKQNVSPPDMSTLSLKGDQALLGGIFYFLNIFSHGELPPHCEQRFLPCEIGCVKYSLQEGIMADFHSFINPGEIPRGFRFHCQAASDSSHKIPISNFERGHNQATVLQNLYRFIHPNPGNWPPIYCKSDDRTRVNWCLKHMAKASEIRQDLQLLTVEDLVVGIYQQKFLKEPSKTWIRSLLDVAMWDYSSNTRCKWHEENDILFCALAVCKKIAYCISNSLATLFGIQLTEAHVPLQDYEASNSVTPKMVVLDAGRYQKLRVGSSGFSHFNSANQEQRSNTPIGDYPSRAKISGQNSSVRGRGITRLLESISNSSSNIHKFSNCDTSLSSYMSQKDGYKSFSSLS.

The HMG box DNA-binding region spans 4–73; sequence RKASRNAYYF…AQGKDSGPSE (70 aa). Disordered regions lie at residues 62 to 94 and 357 to 385; these read RAAQ…KQNV and SHFN…SGQN. A compositionally biased stretch (polar residues) spans 357-371; sequence SHFNSANQEQRSNTP.

The protein belongs to the maelstrom family. As to quaternary structure, interacts with SMARCB1, SIN3B and DDX4. Interacts with piRNA-associated proteins TDRD1, PIWIL1 and PIWIL2. Interacts with TEX19.

Its subcellular location is the cytoplasm. The protein resides in the nucleus. Functionally, plays a central role during spermatogenesis by repressing transposable elements and preventing their mobilization, which is essential for the germline integrity. Acts via the piRNA metabolic process, which mediates the repression of transposable elements during meiosis by forming complexes composed of piRNAs and Piwi proteins and governs the methylation and subsequent repression of transposons. Its association with piP-bodies suggests a participation in the secondary piRNAs metabolic process. Required for the localization of germ-cell factors to the meiotic nuage. This Macaca fascicularis (Crab-eating macaque) protein is Protein maelstrom homolog (MAEL).